A 121-amino-acid chain; its full sequence is Large ribosomal subunit protein uL14c (121 aa).

Belongs to the universal ribosomal protein uL14 family. In terms of assembly, part of the 50S ribosomal subunit.

The protein localises to the plastid. Its subcellular location is the chloroplast. Functionally, binds to 23S rRNA. The chain is Large ribosomal subunit protein uL14c from Pelargonium hortorum (Common geranium).